The primary structure comprises 204 residues: Leucyl/phenylalanyl-tRNA--protein transferase (204 aa).

The protein belongs to the L/F-transferase family.

The protein localises to the cytoplasm. It catalyses the reaction N-terminal L-lysyl-[protein] + L-leucyl-tRNA(Leu) = N-terminal L-leucyl-L-lysyl-[protein] + tRNA(Leu) + H(+). The enzyme catalyses N-terminal L-arginyl-[protein] + L-leucyl-tRNA(Leu) = N-terminal L-leucyl-L-arginyl-[protein] + tRNA(Leu) + H(+). It carries out the reaction L-phenylalanyl-tRNA(Phe) + an N-terminal L-alpha-aminoacyl-[protein] = an N-terminal L-phenylalanyl-L-alpha-aminoacyl-[protein] + tRNA(Phe). Functions in the N-end rule pathway of protein degradation where it conjugates Leu, Phe and, less efficiently, Met from aminoacyl-tRNAs to the N-termini of proteins containing an N-terminal arginine or lysine. The chain is Leucyl/phenylalanyl-tRNA--protein transferase from Rhizobium johnstonii (strain DSM 114642 / LMG 32736 / 3841) (Rhizobium leguminosarum bv. viciae).